We begin with the raw amino-acid sequence, 918 residues long: Chitin synthase C (918 aa).

The segment at methionine 1–glutamate 63 is disordered. A compositionally biased stretch (low complexity) spans asparagine 22–leucine 37. Transmembrane regions (helical) follow at residues tryptophan 562–tryptophan 581, leucine 605–leucine 625, valine 637–serine 657, and methionine 672–valine 692. Residue asparagine 712 is glycosylated (N-linked (GlcNAc...) asparagine). 3 helical membrane passes run phenylalanine 715 to isoleucine 735, valine 845 to glycine 865, and valine 890 to leucine 910.

It belongs to the chitin synthase family. Class I subfamily. In terms of tissue distribution, mainly expressed in hyphae and conidiphores. Relatively strongly expressed in young cleistothecia and in mature ascospores, but negligible in Huelle cells.

Its subcellular location is the cell membrane. It is found in the cell septum. The protein resides in the cell tip. The enzyme catalyses [(1-&gt;4)-N-acetyl-beta-D-glucosaminyl](n) + UDP-N-acetyl-alpha-D-glucosamine = [(1-&gt;4)-N-acetyl-beta-D-glucosaminyl](n+1) + UDP + H(+). In terms of biological role, polymerizes chitin, a structural polymer of the cell wall and septum, by transferring the sugar moiety of UDP-GlcNAc to the non-reducing end of the growing chitin polymer. ChsC and chsA share critical functions in hyphal wall integrity and differentiation. ChsA and chsC share also overlapping roles in septum formation. This Emericella nidulans (strain FGSC A4 / ATCC 38163 / CBS 112.46 / NRRL 194 / M139) (Aspergillus nidulans) protein is Chitin synthase C.